We begin with the raw amino-acid sequence, 511 residues long: Activin receptor type-2B (511 aa).

The first 20 residues, 1-20, serve as a signal peptide directing secretion; that stretch reads MGASVALTFLLLLATFRAGS. Over 21–136 the chain is Extracellular; the sequence is GHDEVETREC…KPQPSASVLN (116 aa). Residues C30 and C61 are joined by a disulfide bond. Residues N43 and N67 are each glycosylated (N-linked (GlcNAc...) asparagine). 3 disulfides stabilise this stretch: C86-C105, C92-C104, and C106-C111. Residues 137–157 traverse the membrane as a helical segment; that stretch reads ILIYSLLPIVGLSMAILLAFW. Residues 158–511 are Cytoplasmic-facing; the sequence is MYRHRKPSYG…VDLPPKESSI (354 aa). Residues 189–477 form the Protein kinase domain; the sequence is LQLLDIKARG…LSAGCVEERI (289 aa). ATP-binding positions include 195–203 and K216; that span reads KARGRFGCV. The active-site Proton acceptor is the D320.

It belongs to the protein kinase superfamily. TKL Ser/Thr protein kinase family. TGFB receptor subfamily.

The protein resides in the membrane. The catalysed reaction is L-threonyl-[receptor-protein] + ATP = O-phospho-L-threonyl-[receptor-protein] + ADP + H(+). It carries out the reaction L-seryl-[receptor-protein] + ATP = O-phospho-L-seryl-[receptor-protein] + ADP + H(+). Its function is as follows. Receptor for activin A, activin B and inhibin A. Involved in transmembrane signaling. This is Activin receptor type-2B (acvr2b) from Xenopus laevis (African clawed frog).